A 679-amino-acid polypeptide reads, in one-letter code: Protein hook (679 aa).

The region spanning 5 to 123 is the Calponin-homology (CH) domain; that stretch reads NGMYYSLLEW…RLLQLVLGCA (119 aa). Residues 140–627 are a coiled coil; sequence EEELQANIMR…SKTKMSTMEE (488 aa).

Belongs to the hook family. As to quaternary structure, homodimer. Interacts with microtubules via its N-terminus.

The protein resides in the cytoplasm. It is found in the cytoskeleton. The protein localises to the endosome. Its subcellular location is the synapse. Functionally, involved in endocytic trafficking by stabilizing organelles of the endocytic pathway. Probably acts as a cytoskeletal linker protein required to tether endosome vesicles to the cytoskeleton. Involved in modulation of endocytosis at stages required for down-regulation of membrane proteins that control synapse size. Not involved in synaptic vesicle recycling. Required in R7 cells for boss endocytosis into multivesicular bodies (MVBs). Has a role in regulating adult longevity. This chain is Protein hook, found in Drosophila mojavensis (Fruit fly).